The sequence spans 391 residues: Processive diacylglycerol beta-glucosyltransferase (391 aa).

This sequence belongs to the glycosyltransferase 28 family. UgtP subfamily.

The protein localises to the cell membrane. The catalysed reaction is a 1,2-diacyl-3-O-(beta-D-glucopyranosyl)-sn-glycerol + UDP-alpha-D-glucose = a 1,2-diacyl-3-O-(beta-D-Glc-(1-&gt;6)-beta-D-Glc)-sn-glycerol + UDP + H(+). It catalyses the reaction a 1,2-diacyl-sn-glycerol + UDP-alpha-D-glucose = a 1,2-diacyl-3-O-(beta-D-glucopyranosyl)-sn-glycerol + UDP + H(+). It participates in glycolipid metabolism; diglucosyl-diacylglycerol biosynthesis. In terms of biological role, processive glucosyltransferase involved in the biosynthesis of both the bilayer- and non-bilayer-forming membrane glucolipids. Is able to successively transfer two glucosyl residues to diacylglycerol (DAG), thereby catalyzing the formation of beta-monoglucosyl-DAG (3-O-(beta-D-glucopyranosyl)-1,2-diacyl-sn-glycerol) and beta-diglucosyl-DAG (3-O-(beta-D-glucopyranosyl-beta-(1-&gt;6)-D-glucopyranosyl)-1,2-diacyl-sn-glycerol). Beta-diglucosyl-DAG is the predominant glycolipid found in Bacillales and is also used as a membrane anchor for lipoteichoic acid (LTA). This is Processive diacylglycerol beta-glucosyltransferase from Staphylococcus aureus (strain MRSA252).